The sequence spans 418 residues: Tryptophan synthase beta chain (418 aa).

Positions Met1–Pro18 are enriched in polar residues. Positions Met1–Gly23 are disordered. The residue at position 111 (Lys111) is an N6-(pyridoxal phosphate)lysine.

It belongs to the TrpB family. As to quaternary structure, tetramer of two alpha and two beta chains. It depends on pyridoxal 5'-phosphate as a cofactor.

The catalysed reaction is (1S,2R)-1-C-(indol-3-yl)glycerol 3-phosphate + L-serine = D-glyceraldehyde 3-phosphate + L-tryptophan + H2O. Its pathway is amino-acid biosynthesis; L-tryptophan biosynthesis; L-tryptophan from chorismate: step 5/5. Its function is as follows. The beta subunit is responsible for the synthesis of L-tryptophan from indole and L-serine. This chain is Tryptophan synthase beta chain, found in Parasynechococcus marenigrum (strain WH8102).